The chain runs to 573 residues: 60 kDa heat shock protein, mitochondrial (573 aa).

The N-terminal 26 residues, 1 to 26 (MLRLPTVLRQMRPVSRALAPHLTRAY), are a transit peptide targeting the mitochondrion. Lys-31 carries the N6-succinyllysine modification. Ser-67 and Ser-70 each carry phosphoserine. Lys-75 provides a ligand contact to ATP. Lys-75 is subject to N6-acetyllysine. Lys-82 carries the N6-acetyllysine; alternate modification. Lys-82 is modified (N6-succinyllysine; alternate). Residue Lys-87 is modified to N6-acetyllysine. Tyr-90 carries the post-translational modification Phosphotyrosine. The residue at position 91 (Lys-91) is an N6-acetyllysine. 111–115 (DGTTT) serves as a coordination point for ATP. Position 125 is an N6-acetyllysine; alternate (Lys-125). The residue at position 125 (Lys-125) is an N6-succinyllysine; alternate. Lys-130 carries the N6-acetyllysine modification. Lys-133 carries the post-translational modification N6-acetyllysine; alternate. N6-succinyllysine; alternate is present on Lys-133. Lys-133 is subject to N6-malonyllysine; alternate. Residue Lys-156 is modified to N6-acetyllysine. N6-acetyllysine; alternate occurs at positions 191, 202, 205, 218, and 236. 5 positions are modified to N6-succinyllysine; alternate: Lys-191, Lys-202, Lys-205, Lys-218, and Lys-236. Residue Lys-249 is modified to N6-acetyllysine. At Lys-250 the chain carries N6-acetyllysine; alternate. Lys-250 is modified (N6-succinyllysine; alternate). 2 positions are modified to N6-acetyllysine: Lys-269 and Lys-292. N6-succinyllysine is present on Lys-301. Lys-314 carries the post-translational modification N6-acetyllysine. The residue at position 352 (Lys-352) is an N6-acetyllysine; alternate. Lys-352 carries the N6-succinyllysine; alternate modification. 2 positions are modified to N6-acetyllysine: Lys-359 and Lys-389. Position 396 is an N6-acetyllysine; alternate (Lys-396). The residue at position 396 (Lys-396) is an N6-succinyllysine; alternate. Position 410 is a phosphoserine (Ser-410). Gly-440 contacts ATP. Lys-455 carries the post-translational modification N6-acetyllysine; alternate. An N6-succinyllysine; alternate modification is found at Lys-455. At Lys-469 the chain carries N6-acetyllysine. Lys-481 is modified (N6-acetyllysine; alternate). Lys-481 carries the post-translational modification N6-succinyllysine; alternate. The residue at position 488 (Ser-488) is a Phosphoserine. Asp-520 provides a ligand contact to ATP. Lys-551 is covalently cross-linked (Glycyl lysine isopeptide (Lys-Gly) (interchain with G-Cter in SUMO2)).

The protein belongs to the chaperonin (HSP60) family. In terms of assembly, homoheptamer arranged in a ring structure. The functional units of these chaperonins consist of heptameric rings of the large subunit Hsp60, which function as a back-to-back double ring. Interacts with 2 heptameric Hsp10 rings to form the symmetrical football complex. Interacts with HRAS. Interacts with ATAD3A. Interacts with ETFBKMT and EEF1AKMT3. Interacts with MFHAS1.

The protein resides in the mitochondrion matrix. The enzyme catalyses ATP + H2O + a folded polypeptide = ADP + phosphate + an unfolded polypeptide.. In terms of biological role, chaperonin implicated in mitochondrial protein import and macromolecular assembly. Together with Hsp10, facilitates the correct folding of imported proteins. May also prevent misfolding and promote the refolding and proper assembly of unfolded polypeptides generated under stress conditions in the mitochondrial matrix. The functional units of these chaperonins consist of heptameric rings of the large subunit Hsp60, which function as a back-to-back double ring. In a cyclic reaction, Hsp60 ring complexes bind one unfolded substrate protein per ring, followed by the binding of ATP and association with 2 heptameric rings of the co-chaperonin Hsp10. This leads to sequestration of the substrate protein in the inner cavity of Hsp60 where, for a certain period of time, it can fold undisturbed by other cell components. Synchronous hydrolysis of ATP in all Hsp60 subunits results in the dissociation of the chaperonin rings and the release of ADP and the folded substrate protein. The sequence is that of 60 kDa heat shock protein, mitochondrial (HSPD1) from Cricetulus griseus (Chinese hamster).